Consider the following 508-residue polypeptide: Photosystem II CP47 reaction center protein (508 aa).

6 consecutive transmembrane segments (helical) span residues Ser21 to Ser36, Ile101 to Trp115, Gly140 to Phe156, Ile203 to Ser218, Val237 to Val252, and Ser457 to Arg472.

The protein belongs to the PsbB/PsbC family. PsbB subfamily. PSII is composed of 1 copy each of membrane proteins PsbA, PsbB, PsbC, PsbD, PsbE, PsbF, PsbH, PsbI, PsbJ, PsbK, PsbL, PsbM, PsbT, PsbX, PsbY, PsbZ, Psb30/Ycf12, at least 3 peripheral proteins of the oxygen-evolving complex and a large number of cofactors. It forms dimeric complexes. Requires Binds multiple chlorophylls. PSII binds additional chlorophylls, carotenoids and specific lipids. as cofactor.

It is found in the plastid. It localises to the chloroplast thylakoid membrane. Its function is as follows. One of the components of the core complex of photosystem II (PSII). It binds chlorophyll and helps catalyze the primary light-induced photochemical processes of PSII. PSII is a light-driven water:plastoquinone oxidoreductase, using light energy to abstract electrons from H(2)O, generating O(2) and a proton gradient subsequently used for ATP formation. This chain is Photosystem II CP47 reaction center protein, found in Panax ginseng (Korean ginseng).